We begin with the raw amino-acid sequence, 392 residues long: Formate-dependent phosphoribosylglycinamide formyltransferase (392 aa).

Residues 22–23 and Glu82 each bind N(1)-(5-phospho-beta-D-ribosyl)glycinamide; that span reads EL. ATP-binding positions include Arg114, Lys155, 160–165, 195–198, and Glu203; these read SSGKGQ and EGVV. The ATP-grasp domain occupies 119-308; sequence RLAAEELGLP…EFALHVRAFL (190 aa). Mg(2+)-binding residues include Glu267 and Glu279. Residues Asp286, Lys355, and 362–363 contribute to the N(1)-(5-phospho-beta-D-ribosyl)glycinamide site; that span reads RR.

This sequence belongs to the PurK/PurT family. As to quaternary structure, homodimer.

It carries out the reaction N(1)-(5-phospho-beta-D-ribosyl)glycinamide + formate + ATP = N(2)-formyl-N(1)-(5-phospho-beta-D-ribosyl)glycinamide + ADP + phosphate + H(+). The protein operates within purine metabolism; IMP biosynthesis via de novo pathway; N(2)-formyl-N(1)-(5-phospho-D-ribosyl)glycinamide from N(1)-(5-phospho-D-ribosyl)glycinamide (formate route): step 1/1. Functionally, involved in the de novo purine biosynthesis. Catalyzes the transfer of formate to 5-phospho-ribosyl-glycinamide (GAR), producing 5-phospho-ribosyl-N-formylglycinamide (FGAR). Formate is provided by PurU via hydrolysis of 10-formyl-tetrahydrofolate. This Cronobacter sakazakii (strain ATCC BAA-894) (Enterobacter sakazakii) protein is Formate-dependent phosphoribosylglycinamide formyltransferase.